The sequence spans 245 residues: Short-chain dehydrogenase/reductase pyiH (245 aa).

Residues Ile-18, Arg-42, Asp-68, and Asn-95 each coordinate NADP(+). Ser-150 functions as the Proton donor in the catalytic mechanism.

Belongs to the short-chain dehydrogenases/reductases (SDR) family.

It participates in mycotoxin biosynthesis. In terms of biological role, short-chain dehydrogenase/reductase; part of the gene cluster that mediates the biosynthesis of the mycotoxin pyrichalasin H, a tyrosine-derived cytochalasan that inhibits the growth of rice seedlings, but also inhibits lymphocyte capping and actin polymerization and alters cell morphology. Pyrichalasin H is indicated as the responsible agent for the genus-specific pathogenicity of M.grisea toward crabgrass. The first step in the pathway is catalyzed by the O-methyltransferase pyiA which methylates free tyrosine to generate the precursor O-methyltyrosine. The hybrid PKS-NRPS pyiS, assisted by the enoyl reductase pyiC, are responsible for fusion of the O-methyltyrosine precursor and the polyketide backbone. The polyketide synthase module (PKS) of pyiS is responsible for the synthesis of the polyketide backbone and the downstream nonribosomal peptide synthetase (NRPS) amidates the carboxyl end of the polyketide with the O-methyltyrosine precursor. As the NRPS A-domain demonstrates substrate tolerance, pyiS can also use phenylalanine, tyrosine and even para-chlorophenylalanine as amino acid precursor, which leads to the production of novel cytochalasans, including halogenated cytochalasans. Because pyiS lacks a designated enoylreductase (ER) domain, the required activity is provided the enoyl reductase pyiC. Reduction by the hydrolyase pyiE leads to 1,5-dihydropyrrolone, which is substrate for dehydration and intra-molecular Diels-Alder cyclization by the Diels-Alderase pyiF to yield the required isoindolone-fused macrocycle. The tailoring cytochrome P450 monooxygenases piyD and piyG catalyze the hydroxylation at C-18 and C-7, respectivily, whereas the short-chain dehydrogenase/reductase pyiH reduces the carbonyl at C-21 in preparation for the transfer of an acetyl group by the acetyltransferase pyiB. These 3 reactions whose order is not clear yet, lead to the production of O-methylpyrichalasin J, a deacetylated pyrichalasin H. Finally, pyiB to converts O-methylpyrichalasin J into the final product pyrichalasin H via acetylation of C-21. The chain is Short-chain dehydrogenase/reductase pyiH from Pyricularia grisea (Crabgrass-specific blast fungus).